Here is a 64-residue protein sequence, read N- to C-terminus: Antimicrobial peptide THP2 (64 aa).

The first 28 residues, 1-28, serve as a signal peptide directing secretion; that stretch reads MRILYLLFSLLFLALQVSPGLSSPKRDM. Intrachain disulfides connect C31–C57, C36–C51, and C41–C58.

As to expression, expressed in circulating heterophil granulocytes and bone marrow (at protein level).

Its subcellular location is the secreted. In terms of biological role, antibacterial activity against the Gram-positive bacterium Staphylococcus aureus. Lacks antibacterial activity against the Gram-negative bacterium E.coli K-12. This Meleagris gallopavo (Wild turkey) protein is Antimicrobial peptide THP2.